The following is a 479-amino-acid chain: Citrate synthase, mitochondrial (479 aa).

The transit peptide at 1-37 (MSAILSTTSKSFLSRGSTRQCQNMQKALFALLNARHY) directs the protein to the mitochondrion. Active-site residues include histidine 312, histidine 358, and aspartate 413. Residue serine 462 is modified to Phosphoserine.

Belongs to the citrate synthase family. Monomer and homodimer. Exists as an inactive monomer when phosphorylated. Homodimerization is dependent on dephosphorylation of Ser-462 by PTC7 and is required for activity. In terms of processing, phosphorylation at Ser-462. Dephosphorylated at Ser-462 by PTC7.

The protein localises to the mitochondrion matrix. The catalysed reaction is oxaloacetate + acetyl-CoA + H2O = citrate + CoA + H(+). Its pathway is carbohydrate metabolism; tricarboxylic acid cycle; isocitrate from oxaloacetate: step 1/2. Phosphorylation at Ser-462 inhibits catalytic activity. Dephosphorylation at Ser-462 by PTC7 enhances catalytic activity. Its function is as follows. Specific citrate synthase with catalytic activity only with acetyl-CoA. In Saccharomyces cerevisiae (strain ATCC 204508 / S288c) (Baker's yeast), this protein is Citrate synthase, mitochondrial.